The chain runs to 253 residues: MRKRIIAGNWKMHKTLAEAVQFVENVKGHVPPADEVDSVVCAPFLFLDRLVQAADGTDLKIGAQTMHFADQGAYTGEVSPVMLKDLGVTYVILGHSERRQMFAETDETVNKKVLAAFTRGLIPIICCGESLEEREAGQTNAVVASQVEKALAGLTPEQVKQAVIAYEPIWAIGTGKSSTPEDANSVCGHIRSVVSRLFGPEAAEAIRIQYGGSVKPDNIRDFLAQEQIDGALVGGASLEPASFLQLVEAGRHE.

9–11 (NWK) provides a ligand contact to substrate. His95 serves as the catalytic Electrophile. Catalysis depends on Glu167, which acts as the Proton acceptor. Residues Gly173, Ser213, and 234–235 (GG) each bind substrate. The residue at position 213 (Ser213) is a Phosphoserine.

Belongs to the triosephosphate isomerase family. Homodimer.

It localises to the cytoplasm. It catalyses the reaction D-glyceraldehyde 3-phosphate = dihydroxyacetone phosphate. It functions in the pathway carbohydrate biosynthesis; gluconeogenesis. It participates in carbohydrate degradation; glycolysis; D-glyceraldehyde 3-phosphate from glycerone phosphate: step 1/1. In terms of biological role, involved in the gluconeogenesis. Catalyzes stereospecifically the conversion of dihydroxyacetone phosphate (DHAP) to D-glyceraldehyde-3-phosphate (G3P). This chain is Triosephosphate isomerase, found in Geobacillus kaustophilus (strain HTA426).